The following is a 358-amino-acid chain: Histidinol-phosphate aminotransferase (358 aa).

An N6-(pyridoxal phosphate)lysine modification is found at lysine 217.

Belongs to the class-II pyridoxal-phosphate-dependent aminotransferase family. Histidinol-phosphate aminotransferase subfamily. As to quaternary structure, homodimer. Pyridoxal 5'-phosphate serves as cofactor.

It carries out the reaction L-histidinol phosphate + 2-oxoglutarate = 3-(imidazol-4-yl)-2-oxopropyl phosphate + L-glutamate. The protein operates within amino-acid biosynthesis; L-histidine biosynthesis; L-histidine from 5-phospho-alpha-D-ribose 1-diphosphate: step 7/9. The chain is Histidinol-phosphate aminotransferase from Ruminiclostridium cellulolyticum (strain ATCC 35319 / DSM 5812 / JCM 6584 / H10) (Clostridium cellulolyticum).